A 310-amino-acid polypeptide reads, in one-letter code: Transcriptional activator BRRF1 (310 aa).

The protein belongs to the lymphocryptovirus BBRF1 family.

In terms of biological role, enhances the ability of BRLF1 to induce lytic infection by cooperating with it to transcriptionally activate the BZLF1 promoter. The chain is Transcriptional activator BRRF1 from Epstein-Barr virus (strain AG876) (HHV-4).